The chain runs to 358 residues: F-box only protein 25 (358 aa).

Positions 1–83 are interaction with beta-actin; that stretch reads MPFLGQDWRS…NDTNTQSFYR (83 aa). The F-box domain occupies 226–274; the sequence is LTLSDLPLHMLNNILYRFSDGWDIITLGQVTPTLYMLSEDRQLWKKLCQ.

Part of a SCF (SKP1-cullin-F-box) protein ligase complex consisting of FBXO25, SKP1, CUL1 and RBX1. Interacts directly with SKP1 and CUL1. Interacts (via C-terminus) with beta-actin (via N-terminus).

It localises to the nucleus. The protein operates within protein modification; protein ubiquitination. Substrate-recognition component of the SCF (SKP1-CUL1-F-box protein)-type E3 ubiquitin ligase complex. May play a role in accumulation of expanded polyglutamine (polyQ) protein huntingtin (HTT). The polypeptide is F-box only protein 25 (FBXO25) (Macaca fascicularis (Crab-eating macaque)).